A 459-amino-acid chain; its full sequence is Bifunctional protein GlmU (459 aa).

The tract at residues 1–229 (MLTQEIIIVI…YEEILGINNK (229 aa)) is pyrophosphorylase. Residues 11–14 (LAAG), lysine 25, glutamine 76, 81–82 (GT), 103–105 (YGD), glycine 140, glutamate 154, and asparagine 227 contribute to the UDP-N-acetyl-alpha-D-glucosamine site. Position 105 (aspartate 105) interacts with Mg(2+). Asparagine 227 contacts Mg(2+). The tract at residues 230 to 250 (LQLSNLEKIFQKKQINKLLIN) is linker. Residues 251 to 459 (GVTIKDPSHF…MRSKKIIKKN (209 aa)) are N-acetyltransferase. The UDP-N-acetyl-alpha-D-glucosamine site is built by arginine 333 and lysine 351. The active-site Proton acceptor is histidine 363. UDP-N-acetyl-alpha-D-glucosamine contacts are provided by tyrosine 366 and asparagine 377. Acetyl-CoA contacts are provided by residues alanine 380, 386–387 (NY), serine 405, and alanine 423.

The protein in the N-terminal section; belongs to the N-acetylglucosamine-1-phosphate uridyltransferase family. It in the C-terminal section; belongs to the transferase hexapeptide repeat family. As to quaternary structure, homotrimer. The cofactor is Mg(2+).

It is found in the cytoplasm. It carries out the reaction alpha-D-glucosamine 1-phosphate + acetyl-CoA = N-acetyl-alpha-D-glucosamine 1-phosphate + CoA + H(+). The enzyme catalyses N-acetyl-alpha-D-glucosamine 1-phosphate + UTP + H(+) = UDP-N-acetyl-alpha-D-glucosamine + diphosphate. The protein operates within nucleotide-sugar biosynthesis; UDP-N-acetyl-alpha-D-glucosamine biosynthesis; N-acetyl-alpha-D-glucosamine 1-phosphate from alpha-D-glucosamine 6-phosphate (route II): step 2/2. It functions in the pathway nucleotide-sugar biosynthesis; UDP-N-acetyl-alpha-D-glucosamine biosynthesis; UDP-N-acetyl-alpha-D-glucosamine from N-acetyl-alpha-D-glucosamine 1-phosphate: step 1/1. Its pathway is bacterial outer membrane biogenesis; LPS lipid A biosynthesis. Its function is as follows. Catalyzes the last two sequential reactions in the de novo biosynthetic pathway for UDP-N-acetylglucosamine (UDP-GlcNAc). The C-terminal domain catalyzes the transfer of acetyl group from acetyl coenzyme A to glucosamine-1-phosphate (GlcN-1-P) to produce N-acetylglucosamine-1-phosphate (GlcNAc-1-P), which is converted into UDP-GlcNAc by the transfer of uridine 5-monophosphate (from uridine 5-triphosphate), a reaction catalyzed by the N-terminal domain. This Buchnera aphidicola subsp. Acyrthosiphon pisum (strain 5A) protein is Bifunctional protein GlmU.